A 61-amino-acid polypeptide reads, in one-letter code: MARKSLIAKAKKRPKFKTRAYNRCKICGRSHAYLRKFGMCRICFRELAHEGKLPGVRKASW.

Cys24, Cys27, Cys40, and Cys43 together coordinate Zn(2+).

Belongs to the universal ribosomal protein uS14 family. Zinc-binding uS14 subfamily. As to quaternary structure, part of the 30S ribosomal subunit. Contacts proteins S3 and S10. Zn(2+) is required as a cofactor.

Binds 16S rRNA, required for the assembly of 30S particles and may also be responsible for determining the conformation of the 16S rRNA at the A site. The chain is Small ribosomal subunit protein uS14 from Natranaerobius thermophilus (strain ATCC BAA-1301 / DSM 18059 / JW/NM-WN-LF).